The sequence spans 930 residues: Isoleucine--tRNA ligase (930 aa).

A 'HIGH' region motif is present at residues 57–67; that stretch reads PYANGNIHVGH. E554 lines the L-isoleucyl-5'-AMP pocket. Residues 595-599 carry the 'KMSKS' region motif; that stretch reads KMSKS. Position 598 (K598) interacts with ATP. Residues C888, C891, C908, and C911 each coordinate Zn(2+).

The protein belongs to the class-I aminoacyl-tRNA synthetase family. IleS type 1 subfamily. In terms of assembly, monomer. Requires Zn(2+) as cofactor.

It is found in the cytoplasm. It carries out the reaction tRNA(Ile) + L-isoleucine + ATP = L-isoleucyl-tRNA(Ile) + AMP + diphosphate. Catalyzes the attachment of isoleucine to tRNA(Ile). As IleRS can inadvertently accommodate and process structurally similar amino acids such as valine, to avoid such errors it has two additional distinct tRNA(Ile)-dependent editing activities. One activity is designated as 'pretransfer' editing and involves the hydrolysis of activated Val-AMP. The other activity is designated 'posttransfer' editing and involves deacylation of mischarged Val-tRNA(Ile). This Streptococcus pneumoniae (strain ATCC BAA-255 / R6) protein is Isoleucine--tRNA ligase.